The following is a 149-amino-acid chain: Calmodulin-like protein 3 (149 aa).

4 EF-hand domains span residues 8 to 43, 44 to 79, 81 to 116, and 117 to 149; these read EQIA…LGQN, PTEA…KMKD, DSEE…LGEK, and LSDE…LVSK. 19 residues coordinate Ca(2+): Asp21, Asp23, Asp25, Cys27, Glu32, Asp57, Asp59, Asn61, Thr63, Glu68, Asp94, Asp96, Asn98, Glu105, Asp130, Asp132, Asp134, Gln136, and Glu141.

This sequence belongs to the calmodulin family. As to quaternary structure, interacts with MYO10, the interaction is calcium-dependent and essential for MYO10 function in filopodial extension.

Functionally, may function as a specific light chain of unconventional myosin-10 (MYO10), also enhances MYO10 translation, possibly by acting as a chaperone for the emerging MYO10 heavy chain protein. May compete with calmodulin by binding, with different affinities, to cellular substrates. This chain is Calmodulin-like protein 3 (Calml3), found in Rattus norvegicus (Rat).